We begin with the raw amino-acid sequence, 180 residues long: Shikimate kinase (180 aa).

14–19 contributes to the ATP binding site; sequence GAGKTC. A Mg(2+)-binding site is contributed by threonine 18. Aspartate 36, arginine 60, and glycine 82 together coordinate substrate. Arginine 120 contacts ATP. Arginine 139 contacts substrate.

It belongs to the shikimate kinase family. As to quaternary structure, monomer. Requires Mg(2+) as cofactor.

The protein resides in the cytoplasm. It carries out the reaction shikimate + ATP = 3-phosphoshikimate + ADP + H(+). It participates in metabolic intermediate biosynthesis; chorismate biosynthesis; chorismate from D-erythrose 4-phosphate and phosphoenolpyruvate: step 5/7. Its function is as follows. Catalyzes the specific phosphorylation of the 3-hydroxyl group of shikimic acid using ATP as a cosubstrate. This Stenotrophomonas maltophilia (strain R551-3) protein is Shikimate kinase.